The following is a 269-amino-acid chain: Formamidopyrimidine-DNA glycosylase (269 aa).

Proline 2 serves as the catalytic Schiff-base intermediate with DNA. Glutamate 3 (proton donor) is an active-site residue. Lysine 57 (proton donor; for beta-elimination activity) is an active-site residue. Residues histidine 90, arginine 109, and lysine 150 each coordinate DNA. The FPG-type zinc finger occupies 235–269; sequence QVYGRKGEPCRVCGTPIVATKHAQRATFYCRHCQK. Arginine 259 functions as the Proton donor; for delta-elimination activity in the catalytic mechanism.

It belongs to the FPG family. As to quaternary structure, monomer. The cofactor is Zn(2+).

It catalyses the reaction Hydrolysis of DNA containing ring-opened 7-methylguanine residues, releasing 2,6-diamino-4-hydroxy-5-(N-methyl)formamidopyrimidine.. The enzyme catalyses 2'-deoxyribonucleotide-(2'-deoxyribose 5'-phosphate)-2'-deoxyribonucleotide-DNA = a 3'-end 2'-deoxyribonucleotide-(2,3-dehydro-2,3-deoxyribose 5'-phosphate)-DNA + a 5'-end 5'-phospho-2'-deoxyribonucleoside-DNA + H(+). Its function is as follows. Involved in base excision repair of DNA damaged by oxidation or by mutagenic agents. Acts as a DNA glycosylase that recognizes and removes damaged bases. Has a preference for oxidized purines, such as 7,8-dihydro-8-oxoguanine (8-oxoG). Has AP (apurinic/apyrimidinic) lyase activity and introduces nicks in the DNA strand. Cleaves the DNA backbone by beta-delta elimination to generate a single-strand break at the site of the removed base with both 3'- and 5'-phosphates. This chain is Formamidopyrimidine-DNA glycosylase, found in Salmonella newport (strain SL254).